We begin with the raw amino-acid sequence, 618 residues long: Glutamine--fructose-6-phosphate aminotransferase [isomerizing] (618 aa).

Catalysis depends on Cys-2, which acts as the Nucleophile; for GATase activity. One can recognise a Glutamine amidotransferase type-2 domain in the interval 2–226; the sequence is CGIVGYAGRN…DFETAVLSPT (225 aa). Residues 69-94 form a disordered region; it reads HTRWATHGRPSTKNAHPHNSGGNPGK. SIS domains are found at residues 295–434 and 467–608; these read SEDE…VRDR and CAEG…IDKP. Lys-613 serves as the catalytic For Fru-6P isomerization activity.

Homodimer.

The protein resides in the cytoplasm. The enzyme catalyses D-fructose 6-phosphate + L-glutamine = D-glucosamine 6-phosphate + L-glutamate. Functionally, catalyzes the first step in hexosamine metabolism, converting fructose-6P into glucosamine-6P using glutamine as a nitrogen source. In Methanosarcina acetivorans (strain ATCC 35395 / DSM 2834 / JCM 12185 / C2A), this protein is Glutamine--fructose-6-phosphate aminotransferase [isomerizing].